We begin with the raw amino-acid sequence, 631 residues long: Phosphomethylpyrimidine synthase (631 aa).

Substrate is bound by residues Asn-239, Met-268, Tyr-297, His-333, 353-355 (SRG), 394-397 (DGLR), and Glu-433. His-437 contacts Zn(2+). Tyr-460 serves as a coordination point for substrate. His-501 provides a ligand contact to Zn(2+). The [4Fe-4S] cluster site is built by Cys-581, Cys-584, and Cys-589.

This sequence belongs to the ThiC family. As to quaternary structure, homodimer. [4Fe-4S] cluster is required as a cofactor.

The enzyme catalyses 5-amino-1-(5-phospho-beta-D-ribosyl)imidazole + S-adenosyl-L-methionine = 4-amino-2-methyl-5-(phosphooxymethyl)pyrimidine + CO + 5'-deoxyadenosine + formate + L-methionine + 3 H(+). It functions in the pathway cofactor biosynthesis; thiamine diphosphate biosynthesis. Catalyzes the synthesis of the hydroxymethylpyrimidine phosphate (HMP-P) moiety of thiamine from aminoimidazole ribotide (AIR) in a radical S-adenosyl-L-methionine (SAM)-dependent reaction. The protein is Phosphomethylpyrimidine synthase of Salmonella arizonae (strain ATCC BAA-731 / CDC346-86 / RSK2980).